We begin with the raw amino-acid sequence, 104 residues long: Class I hydrophobin 12 (104 aa).

The signal sequence occupies residues 1–25 (MFSKATLFFTAAVVIVAAGATPTTS). Disulfide bonds link Cys-27–Cys-85, Cys-34–Cys-79, Cys-35–Cys-67, and Cys-86–Cys-99.

The protein belongs to the fungal hydrophobin family. As to quaternary structure, self-assembles to form functional amyloid fibrils called rodlets. Self-assembly into fibrillar rodlets occurs spontaneously at hydrophobic:hydrophilic interfaces and the rodlets further associate laterally to form amphipathic monolayers.

The protein resides in the secreted. The protein localises to the cell wall. Functionally, aerial growth, conidiation, and dispersal of filamentous fungi in the environment rely upon a capability of their secreting small amphipathic proteins called hydrophobins (HPBs) with low sequence identity. Class I can self-assemble into an outermost layer of rodlet bundles on aerial cell surfaces, conferring cellular hydrophobicity that supports fungal growth, development and dispersal; whereas Class II form highly ordered films at water-air interfaces through intermolecular interactions but contribute nothing to the rodlet structure. Hydph12 is a class I hydrophobin involved in the formation of mycelium knots. This Pleurotus ostreatus (strain PC15) (Oyster mushroom) protein is Class I hydrophobin 12.